Here is a 141-residue protein sequence, read N- to C-terminus: Large ribosomal subunit protein bL17 (141 aa).

It belongs to the bacterial ribosomal protein bL17 family. As to quaternary structure, part of the 50S ribosomal subunit. Contacts protein L32.

This is Large ribosomal subunit protein bL17 from Rhizobium meliloti (strain 1021) (Ensifer meliloti).